Consider the following 692-residue polypeptide: Elongation factor G (692 aa).

A tr-type G domain is found at 8–282; the sequence is ENTRNIGIMA…AVIDYLPSPL (275 aa). Residues 17–24, 81–85, and 135–138 contribute to the GTP site; these read AHIDAGKT, DTPGH, and NKMD.

This sequence belongs to the TRAFAC class translation factor GTPase superfamily. Classic translation factor GTPase family. EF-G/EF-2 subfamily.

The protein resides in the cytoplasm. In terms of biological role, catalyzes the GTP-dependent ribosomal translocation step during translation elongation. During this step, the ribosome changes from the pre-translocational (PRE) to the post-translocational (POST) state as the newly formed A-site-bound peptidyl-tRNA and P-site-bound deacylated tRNA move to the P and E sites, respectively. Catalyzes the coordinated movement of the two tRNA molecules, the mRNA and conformational changes in the ribosome. The sequence is that of Elongation factor G from Bacillus cereus (strain Q1).